The following is a 186-amino-acid chain: MDSLKDHFLIAMPSLDDTFFERSVIYICEHDQKGAMGLMVNRPIGVEVEDLLEQMELYLSPEFVFSLDSQVLIGGPVAPERGFVLHTPQQHWVNSTEISEDTMLTSSRDILASIGSDKSPENFVVALGYSGWSKDQLEQEIADNTWLTIKATPELLFNVEPEQMWLMATQQLGFDIWQMSSQVGHA.

It belongs to the UPF0301 (AlgH) family.

This is UPF0301 protein Sfri_2850 from Shewanella frigidimarina (strain NCIMB 400).